A 189-amino-acid chain; its full sequence is Movement protein (189 aa).

The protein belongs to the tombusvirus/aureusvirus movement protein p22 family.

It localises to the host membrane. In terms of biological role, transports viral genome to neighboring plant cells directly through plasmosdesmata, without any budding. The movement protein allows efficient cell to cell propagation, by bypassing the host cell wall barrier. In Cymbidium ringspot virus (CymRSV), this protein is Movement protein.